Here is a 257-residue protein sequence, read N- to C-terminus: MTDLKLAAQRALNLMDLTTLNDDDTDQKVVDLCRKAKSPAGLTAAVCIYPRFIPIARKTLREIGAADVRIATVTNFPHGNDDIEIAVAETRAAVAYGADEVDVVFPYRAFMAGNEQVGFDLVKACKEACGDKALLKVIIETGELKEEALIRRASEICIDAGADFIKTSTGKVPVNATPEAARIMMEVIKAKNPKVGFKPAGGVKDAAVAGQYLAMAEEILGKEWVSARTFRFGASSLLASLLATLGHGDKPANTSGY.

Catalysis depends on aspartate 102, which acts as the Proton donor/acceptor. Residue lysine 166 is the Schiff-base intermediate with acetaldehyde of the active site. The active-site Proton donor/acceptor is the lysine 198.

The protein belongs to the DeoC/FbaB aldolase family. DeoC type 2 subfamily.

Its subcellular location is the cytoplasm. It catalyses the reaction 2-deoxy-D-ribose 5-phosphate = D-glyceraldehyde 3-phosphate + acetaldehyde. It participates in carbohydrate degradation; 2-deoxy-D-ribose 1-phosphate degradation; D-glyceraldehyde 3-phosphate and acetaldehyde from 2-deoxy-alpha-D-ribose 1-phosphate: step 2/2. In terms of biological role, catalyzes a reversible aldol reaction between acetaldehyde and D-glyceraldehyde 3-phosphate to generate 2-deoxy-D-ribose 5-phosphate. The sequence is that of Deoxyribose-phosphate aldolase from Aeromonas salmonicida (strain A449).